Consider the following 209-residue polypeptide: MEVKVLNINGKETGRKVQLSDSVFAIEPNKHAVYLDVKQYLANQRQGTHKAKERAEVAGSTRKIKKQKGTGTARAGSAKNPLFKGGGRVFGPRPRSYSFKLNKTVKRLARRSAFSIKAQEANIIVVEDFVFEAPNTKNFINVLKALGLEDKKSLFVLGDSNKNVYLSSRNLKATNVLTNSELSTYAILNANNLVLLEGSLEGIEENLSK.

The segment at 45–78 (RQGTHKAKERAEVAGSTRKIKKQKGTGTARAGSA) is disordered.

This sequence belongs to the universal ribosomal protein uL4 family. As to quaternary structure, part of the 50S ribosomal subunit.

Its function is as follows. One of the primary rRNA binding proteins, this protein initially binds near the 5'-end of the 23S rRNA. It is important during the early stages of 50S assembly. It makes multiple contacts with different domains of the 23S rRNA in the assembled 50S subunit and ribosome. Functionally, forms part of the polypeptide exit tunnel. The polypeptide is Large ribosomal subunit protein uL4 (Flavobacterium psychrophilum (strain ATCC 49511 / DSM 21280 / CIP 103535 / JIP02/86)).